A 115-amino-acid chain; its full sequence is Mitochondrial zinc maintenance protein 1, mitochondrial (115 aa).

The N-terminal 23 residues, M1–V23, are a transit peptide targeting the mitochondrion.

The protein belongs to the complex I LYR family. MZM1 subfamily. Interacts with RIP1.

It localises to the mitochondrion matrix. Its function is as follows. Assembly factor required for Rieske Fe-S protein RIP1 incorporation into the cytochrome b-c1 (CIII) complex. Functions as a chaperone, binding to this subunit within the mitochondrial matrix and stabilizing it prior to its translocation and insertion into the late CIII dimeric intermediate within the mitochondrial inner membrane. Modulates the mitochondrial matrix zinc pool. This chain is Mitochondrial zinc maintenance protein 1, mitochondrial (MZM1), found in Penicillium rubens (strain ATCC 28089 / DSM 1075 / NRRL 1951 / Wisconsin 54-1255) (Penicillium chrysogenum).